We begin with the raw amino-acid sequence, 1073 residues long: Carbamoyl phosphate synthase large chain (1073 aa).

Positions 1–403 are carboxyphosphate synthetic domain; that stretch reads MPKRTDIKSI…SLQKALRGLE (403 aa). ATP-binding residues include Arg129, Arg169, Gly175, Gly176, Glu208, Leu210, Glu215, Gly241, Val242, His243, Gln285, and Glu299. The region spanning 133 to 328 is the ATP-grasp 1 domain; the sequence is DKAMKDIGLE…IAKIAAKLAI (196 aa). Mg(2+) is bound by residues Gln285, Glu299, and Asn301. Mn(2+)-binding residues include Gln285, Glu299, and Asn301. The segment at 404 to 553 is oligomerization domain; the sequence is VGACGLDPKV…YSTYEEECEA (150 aa). Positions 554 to 935 are carbamoyl phosphate synthetic domain; the sequence is NPSTRDKIMI…AFAKAQMGAS (382 aa). Positions 678 to 869 constitute an ATP-grasp 2 domain; the sequence is QQMVQRLSLL…LAMIAARVMA (192 aa). Residues Arg714, His753, Leu755, Glu760, Gly785, Val786, His787, Ser788, Gln828, and Glu840 each coordinate ATP. The Mg(2+) site is built by Gln828, Glu840, and Asn842. Residues Gln828, Glu840, and Asn842 each coordinate Mn(2+). In terms of domain architecture, MGS-like spans 936 to 1073; that stretch reads EVLPTGGTAF…LQDLHAGLKA (138 aa). Residues 936–1073 form an allosteric domain region; that stretch reads EVLPTGGTAF…LQDLHAGLKA (138 aa).

This sequence belongs to the CarB family. Composed of two chains; the small (or glutamine) chain promotes the hydrolysis of glutamine to ammonia, which is used by the large (or ammonia) chain to synthesize carbamoyl phosphate. Tetramer of heterodimers (alpha,beta)4. It depends on Mg(2+) as a cofactor. Requires Mn(2+) as cofactor.

The enzyme catalyses hydrogencarbonate + L-glutamine + 2 ATP + H2O = carbamoyl phosphate + L-glutamate + 2 ADP + phosphate + 2 H(+). It catalyses the reaction hydrogencarbonate + NH4(+) + 2 ATP = carbamoyl phosphate + 2 ADP + phosphate + 2 H(+). The protein operates within amino-acid biosynthesis; L-arginine biosynthesis; carbamoyl phosphate from bicarbonate: step 1/1. It participates in pyrimidine metabolism; UMP biosynthesis via de novo pathway; (S)-dihydroorotate from bicarbonate: step 1/3. Its function is as follows. Large subunit of the glutamine-dependent carbamoyl phosphate synthetase (CPSase). CPSase catalyzes the formation of carbamoyl phosphate from the ammonia moiety of glutamine, carbonate, and phosphate donated by ATP, constituting the first step of 2 biosynthetic pathways, one leading to arginine and/or urea and the other to pyrimidine nucleotides. The large subunit (synthetase) binds the substrates ammonia (free or transferred from glutamine from the small subunit), hydrogencarbonate and ATP and carries out an ATP-coupled ligase reaction, activating hydrogencarbonate by forming carboxy phosphate which reacts with ammonia to form carbamoyl phosphate. The chain is Carbamoyl phosphate synthase large chain from Pseudomonas putida (strain ATCC 47054 / DSM 6125 / CFBP 8728 / NCIMB 11950 / KT2440).